The chain runs to 135 residues: Protein KRTCAP2 homolog (135 aa).

4 helical membrane-spanning segments follow: residues 1-21, 35-55, 69-89, and 93-113; these read MAVS…LLFA, PMAI…LTAI, TKLI…SGMV, and CITT…RISI.

This sequence belongs to the KRTCAP2 family. In terms of assembly, component of the oligosaccharyltransferase (OST) complex.

It localises to the membrane. Subunit of the oligosaccharyl transferase (OST) complex that catalyzes the initial transfer of a defined glycan (Glc(3)Man(9)GlcNAc(2) in eukaryotes) from the lipid carrier dolichol-pyrophosphate to an asparagine residue within an Asn-X-Ser/Thr consensus motif in nascent polypeptide chains, the first step in protein N-glycosylation. N-glycosylation occurs cotranslationally and the complex associates with the Sec61 complex at the channel-forming translocon complex that mediates protein translocation across the endoplasmic reticulum (ER). All subunits are required for a maximal enzyme activity. The chain is Protein KRTCAP2 homolog from Ixodes scapularis (Black-legged tick).